The chain runs to 113 residues: MLPCLALLLLMELSVCTVAGDGGEEQTLSTEAETWVIVALEEGAGPSIQLQLQEVKTGKASQFFGLMGKRVGGRPLIQPRRKKAYQLEHTFQGLLGKRSLFTEGREDEAQGSE.

Positions 1–20 are cleaved as a signal peptide; the sequence is MLPCLALLLLMELSVCTVAG. M67 is subject to Methionine amide. Residues 71–79 constitute a propeptide that is removed on maturation; that stretch reads VGGRPLIQP. L95 carries the leucine amide modification. A propeptide spanning residues 98–113 is cleaved from the precursor; it reads RSLFTEGREDEAQGSE.

It belongs to the tachykinin family. Expressed at low levels in the uterus of both pregnant and non-pregnant women. Isoform 1 is found only in the adrenal gland and fetal liver. Isoform 2 is found in heart, liver, bone marrow, prostate, adrenal gland and testis. Isoform 3 and isoform 4 are expressed predominantly in adrenal gland and placenta.

Its subcellular location is the secreted. Tachykinins are active peptides which excite neurons, evoke behavioral responses, are potent vasodilators and secretagogues, and contract (directly or indirectly) many smooth muscles. Endokinin-A induces thermal hyperalgesia and pain-related behavior such as scratching following intrathecal administration in rats. These effects are suppressed by treatment with endokinin-C. Endokinin-A/B reduces arterial blood pressure and increases sperm motility. The protein is Tachykinin-4 of Homo sapiens (Human).